The chain runs to 187 residues: ADP-ribosylation factor-like protein 9 (187 aa).

GTP-binding positions include 25-32 (GLDGAGKT), 69-73 (EIGGS), and 126-129 (NKQD).

The protein belongs to the small GTPase superfamily. Arf family.

In Homo sapiens (Human), this protein is ADP-ribosylation factor-like protein 9 (ARL9).